The primary structure comprises 258 residues: Acetylglutamate kinase (258 aa).

Substrate is bound by residues 41–42, arginine 63, and asparagine 156; that span reads GG.

This sequence belongs to the acetylglutamate kinase family. ArgB subfamily.

Its subcellular location is the cytoplasm. The catalysed reaction is N-acetyl-L-glutamate + ATP = N-acetyl-L-glutamyl 5-phosphate + ADP. Its pathway is amino-acid biosynthesis; L-arginine biosynthesis; N(2)-acetyl-L-ornithine from L-glutamate: step 2/4. Its function is as follows. Catalyzes the ATP-dependent phosphorylation of N-acetyl-L-glutamate. This chain is Acetylglutamate kinase, found in Bacillus velezensis (strain DSM 23117 / BGSC 10A6 / LMG 26770 / FZB42) (Bacillus amyloliquefaciens subsp. plantarum).